Reading from the N-terminus, the 949-residue chain is UvrABC system protein A (949 aa).

42-49 (GLSGSGKS) is a binding site for ATP. Residues 262–289 (CPVCSYSLPELEPRLFSFNNPMGSCPTC) form a C4-type zinc finger. ABC transporter domains lie at 319-596 (WDKR…ENSV) and 616-945 (VNPD…KYLK). Residue 649–656 (GVSGSGKS) participates in ATP binding. Residues 748–774 (CEACQGDGVIKVEMHFLPDVYVPCEVC) form a C4-type zinc finger.

The protein belongs to the ABC transporter superfamily. UvrA family. Forms a heterotetramer with UvrB during the search for lesions.

The protein localises to the cytoplasm. The UvrABC repair system catalyzes the recognition and processing of DNA lesions. UvrA is an ATPase and a DNA-binding protein. A damage recognition complex composed of 2 UvrA and 2 UvrB subunits scans DNA for abnormalities. When the presence of a lesion has been verified by UvrB, the UvrA molecules dissociate. This is UvrABC system protein A from Neisseria meningitidis serogroup B (strain ATCC BAA-335 / MC58).